The primary structure comprises 265 residues: Phosphate import ATP-binding protein PstB (265 aa).

The ABC transporter domain occupies 18–260 (ISARDVQVFY…PEDPRTESYI (243 aa)). 50–57 (GPSGCGKS) provides a ligand contact to ATP.

This sequence belongs to the ABC transporter superfamily. Phosphate importer (TC 3.A.1.7) family. As to quaternary structure, the complex is composed of two ATP-binding proteins (PstB), two transmembrane proteins (PstC and PstA) and a solute-binding protein (PstS).

Its subcellular location is the cell inner membrane. The enzyme catalyses phosphate(out) + ATP + H2O = ADP + 2 phosphate(in) + H(+). Its function is as follows. Part of the ABC transporter complex PstSACB involved in phosphate import. Responsible for energy coupling to the transport system. The polypeptide is Phosphate import ATP-binding protein PstB (Roseobacter denitrificans (strain ATCC 33942 / OCh 114) (Erythrobacter sp. (strain OCh 114))).